A 376-amino-acid chain; its full sequence is Lipoyl synthase, mitochondrial (376 aa).

The [4Fe-4S] cluster site is built by cysteine 102, cysteine 107, cysteine 113, cysteine 133, cysteine 137, cysteine 140, and serine 348. The Radical SAM core domain maps to 116-337 (GGEDKTATAT…EEVGGEMGFA (222 aa)).

The protein belongs to the radical SAM superfamily. Lipoyl synthase family. Requires [4Fe-4S] cluster as cofactor.

It is found in the mitochondrion. It carries out the reaction [[Fe-S] cluster scaffold protein carrying a second [4Fe-4S](2+) cluster] + N(6)-octanoyl-L-lysyl-[protein] + 2 oxidized [2Fe-2S]-[ferredoxin] + 2 S-adenosyl-L-methionine + 4 H(+) = [[Fe-S] cluster scaffold protein] + N(6)-[(R)-dihydrolipoyl]-L-lysyl-[protein] + 4 Fe(3+) + 2 hydrogen sulfide + 2 5'-deoxyadenosine + 2 L-methionine + 2 reduced [2Fe-2S]-[ferredoxin]. It functions in the pathway protein modification; protein lipoylation via endogenous pathway; protein N(6)-(lipoyl)lysine from octanoyl-[acyl-carrier-protein]: step 2/2. Catalyzes the radical-mediated insertion of two sulfur atoms into the C-6 and C-8 positions of the octanoyl moiety bound to the lipoyl domains of lipoate-dependent enzymes, thereby converting the octanoylated domains into lipoylated derivatives. The polypeptide is Lipoyl synthase, mitochondrial (Branchiostoma floridae (Florida lancelet)).